The chain runs to 61 residues: Photosystem II reaction center protein K (61 aa).

Residues Met1–Asp24 constitute a propeptide that is removed on maturation. The chain crosses the membrane as a helical span at residues Ile36 to Ala56.

It belongs to the PsbK family. As to quaternary structure, PSII is composed of 1 copy each of membrane proteins PsbA, PsbB, PsbC, PsbD, PsbE, PsbF, PsbH, PsbI, PsbJ, PsbK, PsbL, PsbM, PsbT, PsbX, PsbY, PsbZ, Psb30/Ycf12, at least 3 peripheral proteins of the oxygen-evolving complex and a large number of cofactors. It forms dimeric complexes.

It localises to the plastid. Its subcellular location is the chloroplast thylakoid membrane. In terms of biological role, one of the components of the core complex of photosystem II (PSII). PSII is a light-driven water:plastoquinone oxidoreductase that uses light energy to abstract electrons from H(2)O, generating O(2) and a proton gradient subsequently used for ATP formation. It consists of a core antenna complex that captures photons, and an electron transfer chain that converts photonic excitation into a charge separation. The chain is Photosystem II reaction center protein K from Lotus japonicus (Lotus corniculatus var. japonicus).